Reading from the N-terminus, the 240-residue chain is Ribonuclease PH (240 aa).

Phosphate is bound by residues Arg-87 and 125–127 (GTR).

The protein belongs to the RNase PH family. As to quaternary structure, homohexameric ring arranged as a trimer of dimers.

The catalysed reaction is tRNA(n+1) + phosphate = tRNA(n) + a ribonucleoside 5'-diphosphate. Its function is as follows. Phosphorolytic 3'-5' exoribonuclease that plays an important role in tRNA 3'-end maturation. Removes nucleotide residues following the 3'-CCA terminus of tRNAs; can also add nucleotides to the ends of RNA molecules by using nucleoside diphosphates as substrates, but this may not be physiologically important. Probably plays a role in initiation of 16S rRNA degradation (leading to ribosome degradation) during starvation. The polypeptide is Ribonuclease PH (Pseudomonas fluorescens (strain ATCC BAA-477 / NRRL B-23932 / Pf-5)).